Consider the following 385-residue polypeptide: MGNWLLPEGLADVLPAEARRIEELRRELLDLYRTYGFELVAPPLVEYIDSLLSGMGGDLNLYTCKLIDQLSGRTLGVRADMTTQVSRIDAHLLNRNSVTRLCYCGTVLHARPADLLSSRELLQIGAEIYGHVGFEADLEILQLVLETVAIAGVSRPRLDLSHPGVVKALFDADPAAAAISGRIIMLLREKDVAGLAELAGVEPALRADTLAALGALVRLYGEIDVIDRARQELPALPALVLALDELERLARAVPDVALGLDLADVGGYGYHSGVTFELYAQGWHDALVRGGRYDDVGRAFGRARPATGFSLDLRKLAAGLSPAEPGRAIRAPWGQDPALVGAVRALRHTGEIVVQVLPGHEHDQDEFVCDRELVLQDGAWTVKTL.

Belongs to the class-II aminoacyl-tRNA synthetase family. HisZ subfamily. As to quaternary structure, heteromultimer composed of HisG and HisZ subunits.

The protein resides in the cytoplasm. Its pathway is amino-acid biosynthesis; L-histidine biosynthesis; L-histidine from 5-phospho-alpha-D-ribose 1-diphosphate: step 1/9. Its function is as follows. Required for the first step of histidine biosynthesis. May allow the feedback regulation of ATP phosphoribosyltransferase activity by histidine. This Bordetella avium (strain 197N) protein is ATP phosphoribosyltransferase regulatory subunit.